The chain runs to 447 residues: Tubulin beta-2 chain (447 aa).

Gln11, Glu69, Ser138, Gly142, Thr143, Gly144, Asn204, and Asn226 together coordinate GTP. Glu69 is a binding site for Mg(2+). A disordered region spans residues 427–447; the sequence is DASISEGEEEYEEEQQLENEE. The segment covering 432-447 has biased composition (acidic residues); it reads EGEEEYEEEQQLENEE.

Belongs to the tubulin family. In terms of assembly, dimer of alpha and beta chains. A typical microtubule is a hollow water-filled tube with an outer diameter of 25 nm and an inner diameter of 15 nM. Alpha-beta heterodimers associate head-to-tail to form protofilaments running lengthwise along the microtubule wall with the beta-tubulin subunit facing the microtubule plus end conferring a structural polarity. Microtubules usually have 13 protofilaments but different protofilament numbers can be found in some organisms and specialized cells. Requires Mg(2+) as cofactor.

It localises to the cytoplasm. The protein localises to the cytoskeleton. In terms of biological role, tubulin is the major constituent of microtubules, a cylinder consisting of laterally associated linear protofilaments composed of alpha- and beta-tubulin heterodimers. Microtubules grow by the addition of GTP-tubulin dimers to the microtubule end, where a stabilizing cap forms. Below the cap, tubulin dimers are in GDP-bound state, owing to GTPase activity of alpha-tubulin. The sequence is that of Tubulin beta-2 chain (TUB2) from Erysiphe pisi (Pea powdery mildew).